The sequence spans 89 residues: Small ribosomal subunit protein uS14 (89 aa).

This sequence belongs to the universal ribosomal protein uS14 family. As to quaternary structure, part of the 30S ribosomal subunit. Contacts proteins S3 and S10.

Its function is as follows. Binds 16S rRNA, required for the assembly of 30S particles and may also be responsible for determining the conformation of the 16S rRNA at the A site. The polypeptide is Small ribosomal subunit protein uS14 (Chlorobaculum tepidum (strain ATCC 49652 / DSM 12025 / NBRC 103806 / TLS) (Chlorobium tepidum)).